The primary structure comprises 684 residues: Probable potassium transport system protein Kup (684 aa).

The next 12 membrane-spanning stretches (helical) occupy residues 19–39 (ALLV…LYVM), 61–81 (VSLI…LIAL), 104–124 (WLVL…MLTP), 151–171 (QVIW…RFGT), 177–197 (AFGP…FIAL), 223–243 (MGLF…ALYS), 255–275 (LSWP…AVWL), 303–323 (LGAI…LISG), 352–372 (LYIP…IGYF), 381–401 (AYGL…YQYL), 407–427 (PAVV…VFFI), and 433–453 (FLHG…VMYV).

The protein belongs to the HAK/KUP transporter (TC 2.A.72) family.

It is found in the cell membrane. It catalyses the reaction K(+)(in) + H(+)(in) = K(+)(out) + H(+)(out). In terms of biological role, transport of potassium into the cell. Likely operates as a K(+):H(+) symporter. This is Probable potassium transport system protein Kup from Lacticaseibacillus paracasei (strain ATCC 334 / BCRC 17002 / CCUG 31169 / CIP 107868 / KCTC 3260 / NRRL B-441) (Lactobacillus paracasei).